The chain runs to 372 residues: Carbamoyl phosphate synthase small chain (372 aa).

The segment at 1–186 is CPSase; the sequence is MTYCKRGTEG…IHQNNSPDII (186 aa). L-glutamine contacts are provided by S52, G233, and G235. The Glutamine amidotransferase type-1 domain maps to 185–372; that stretch reads IIVLVDCGIK…KKMVIKDEGN (188 aa). C261 acts as the Nucleophile in catalysis. Residues L262, Q265, N303, G305, and Y306 each coordinate L-glutamine. Active-site residues include H345 and E347.

This sequence belongs to the CarA family. As to quaternary structure, composed of two chains; the small (or glutamine) chain promotes the hydrolysis of glutamine to ammonia, which is used by the large (or ammonia) chain to synthesize carbamoyl phosphate. Tetramer of heterodimers (alpha,beta)4.

It carries out the reaction hydrogencarbonate + L-glutamine + 2 ATP + H2O = carbamoyl phosphate + L-glutamate + 2 ADP + phosphate + 2 H(+). The catalysed reaction is L-glutamine + H2O = L-glutamate + NH4(+). It participates in amino-acid biosynthesis; L-arginine biosynthesis; carbamoyl phosphate from bicarbonate: step 1/1. It functions in the pathway pyrimidine metabolism; UMP biosynthesis via de novo pathway; (S)-dihydroorotate from bicarbonate: step 1/3. Small subunit of the glutamine-dependent carbamoyl phosphate synthetase (CPSase). CPSase catalyzes the formation of carbamoyl phosphate from the ammonia moiety of glutamine, carbonate, and phosphate donated by ATP, constituting the first step of 2 biosynthetic pathways, one leading to arginine and/or urea and the other to pyrimidine nucleotides. The small subunit (glutamine amidotransferase) binds and cleaves glutamine to supply the large subunit with the substrate ammonia. This is Carbamoyl phosphate synthase small chain from Metallosphaera sedula (strain ATCC 51363 / DSM 5348 / JCM 9185 / NBRC 15509 / TH2).